A 431-amino-acid chain; its full sequence is Enolase (431 aa).

Residue glutamine 166 coordinates (2R)-2-phosphoglycerate. Glutamate 208 acts as the Proton donor in catalysis. Mg(2+) contacts are provided by aspartate 245, glutamate 288, and aspartate 315. (2R)-2-phosphoglycerate-binding residues include lysine 340, arginine 369, serine 370, and lysine 391. Residue lysine 340 is the Proton acceptor of the active site.

It belongs to the enolase family. It depends on Mg(2+) as a cofactor.

The protein localises to the cytoplasm. Its subcellular location is the secreted. It localises to the cell surface. It catalyses the reaction (2R)-2-phosphoglycerate = phosphoenolpyruvate + H2O. It participates in carbohydrate degradation; glycolysis; pyruvate from D-glyceraldehyde 3-phosphate: step 4/5. Catalyzes the reversible conversion of 2-phosphoglycerate (2-PG) into phosphoenolpyruvate (PEP). It is essential for the degradation of carbohydrates via glycolysis. In Clostridium botulinum (strain Okra / Type B1), this protein is Enolase.